Here is a 219-residue protein sequence, read N- to C-terminus: Ribose-5-phosphate isomerase A (219 aa).

Residues 28–31, 81–84, and 94–97 contribute to the substrate site; these read SGST, DGAD, and KGGG. The Proton acceptor role is filled by E103. Substrate is bound at residue K121.

It belongs to the ribose 5-phosphate isomerase family. As to quaternary structure, homodimer.

The enzyme catalyses aldehydo-D-ribose 5-phosphate = D-ribulose 5-phosphate. Its pathway is carbohydrate degradation; pentose phosphate pathway; D-ribose 5-phosphate from D-ribulose 5-phosphate (non-oxidative stage): step 1/1. Catalyzes the reversible conversion of ribose-5-phosphate to ribulose 5-phosphate. This is Ribose-5-phosphate isomerase A from Glaesserella parasuis serovar 5 (strain SH0165) (Haemophilus parasuis).